Here is a 162-residue protein sequence, read N- to C-terminus: Protein LTO1 (162 aa).

Residues 17-53 (GFLEGQNENIKQSFLEGKQYGLQVGFQRFTLLGQMEG) form a deca-GX3 motif; required for interaction with YAE1 and the CIA complex region.

It belongs to the LTO1 family. Forms a complex with YAE1; the complex bridges the interaction between the CIA complex and RLI1. Associates with the CIA complex (via its C-terminal tryptophan).

It is found in the nucleus. Functionally, essential for life in oxygen, but nonessential under anaerobic conditions. Required for biogenesis of the large ribosomal subunit and initiation of translation in oxygen. The complex LTO1:YAE1 functions as a target specific adapter that recruits apo-RLI1 to the cytosolic iron-sulfur protein assembly (CIA) complex machinery. The protein is Protein LTO1 of Saccharomyces cerevisiae (strain ATCC 204508 / S288c) (Baker's yeast).